Reading from the N-terminus, the 463-residue chain is Asparagine--tRNA ligase (463 aa).

The protein belongs to the class-II aminoacyl-tRNA synthetase family. Homodimer.

Its subcellular location is the cytoplasm. The catalysed reaction is tRNA(Asn) + L-asparagine + ATP = L-asparaginyl-tRNA(Asn) + AMP + diphosphate + H(+). In Bacillus cereus (strain ZK / E33L), this protein is Asparagine--tRNA ligase.